The chain runs to 274 residues: Shikimate dehydrogenase (NADP(+)) (274 aa).

Shikimate-binding positions include 15–17 (SKS) and Thr62. Catalysis depends on Lys66, which acts as the Proton acceptor. Asp78 contributes to the NADP(+) binding site. Positions 87 and 102 each coordinate shikimate. NADP(+) contacts are provided by residues 127 to 131 (GAGGA) and Met215. Tyr217 contributes to the shikimate binding site. Residue Gly239 coordinates NADP(+).

Belongs to the shikimate dehydrogenase family. As to quaternary structure, homodimer.

It catalyses the reaction shikimate + NADP(+) = 3-dehydroshikimate + NADPH + H(+). The protein operates within metabolic intermediate biosynthesis; chorismate biosynthesis; chorismate from D-erythrose 4-phosphate and phosphoenolpyruvate: step 4/7. Functionally, involved in the biosynthesis of the chorismate, which leads to the biosynthesis of aromatic amino acids. Catalyzes the reversible NADPH linked reduction of 3-dehydroshikimate (DHSA) to yield shikimate (SA). The polypeptide is Shikimate dehydrogenase (NADP(+)) (Dechloromonas aromatica (strain RCB)).